A 95-amino-acid chain; its full sequence is Phosphoribosyl-ATP pyrophosphatase (95 aa).

This sequence belongs to the PRA-PH family.

It is found in the cytoplasm. The catalysed reaction is 1-(5-phospho-beta-D-ribosyl)-ATP + H2O = 1-(5-phospho-beta-D-ribosyl)-5'-AMP + diphosphate + H(+). It participates in amino-acid biosynthesis; L-histidine biosynthesis; L-histidine from 5-phospho-alpha-D-ribose 1-diphosphate: step 2/9. The polypeptide is Phosphoribosyl-ATP pyrophosphatase (Methanocella arvoryzae (strain DSM 22066 / NBRC 105507 / MRE50)).